We begin with the raw amino-acid sequence, 240 residues long: UDP-2,3-diacylglucosamine hydrolase (240 aa).

Positions 8, 10, 41, 79, and 114 each coordinate Mn(2+). 79–80 (NR) provides a ligand contact to substrate. Positions 122, 160, 164, 167, and 195 each coordinate substrate. Mn(2+) contacts are provided by H195 and H197.

It belongs to the LpxH family. The cofactor is Mn(2+).

It is found in the cell inner membrane. It catalyses the reaction UDP-2-N,3-O-bis[(3R)-3-hydroxytetradecanoyl]-alpha-D-glucosamine + H2O = 2-N,3-O-bis[(3R)-3-hydroxytetradecanoyl]-alpha-D-glucosaminyl 1-phosphate + UMP + 2 H(+). It participates in glycolipid biosynthesis; lipid IV(A) biosynthesis; lipid IV(A) from (3R)-3-hydroxytetradecanoyl-[acyl-carrier-protein] and UDP-N-acetyl-alpha-D-glucosamine: step 4/6. Its function is as follows. Hydrolyzes the pyrophosphate bond of UDP-2,3-diacylglucosamine to yield 2,3-diacylglucosamine 1-phosphate (lipid X) and UMP by catalyzing the attack of water at the alpha-P atom. Involved in the biosynthesis of lipid A, a phosphorylated glycolipid that anchors the lipopolysaccharide to the outer membrane of the cell. The polypeptide is UDP-2,3-diacylglucosamine hydrolase (Cellvibrio japonicus (strain Ueda107) (Pseudomonas fluorescens subsp. cellulosa)).